Here is a 236-residue protein sequence, read N- to C-terminus: Orotidine 5'-phosphate decarboxylase (236 aa).

Substrate is bound by residues Asp-16, Lys-38, 65 to 74 (DLKLHDIGNT), Thr-123, Arg-184, Gln-193, Gly-213, and Arg-214. Lys-67 functions as the Proton donor in the catalytic mechanism.

This sequence belongs to the OMP decarboxylase family. Type 1 subfamily. As to quaternary structure, homodimer.

It catalyses the reaction orotidine 5'-phosphate + H(+) = UMP + CO2. It functions in the pathway pyrimidine metabolism; UMP biosynthesis via de novo pathway; UMP from orotate: step 2/2. Functionally, catalyzes the decarboxylation of orotidine 5'-monophosphate (OMP) to uridine 5'-monophosphate (UMP). This chain is Orotidine 5'-phosphate decarboxylase, found in Methylobacterium nodulans (strain LMG 21967 / CNCM I-2342 / ORS 2060).